A 240-amino-acid chain; its full sequence is Small ribosomal subunit protein uS2c (240 aa).

This sequence belongs to the universal ribosomal protein uS2 family.

The protein resides in the plastid. It localises to the chloroplast. In Cycas taitungensis (Prince sago), this protein is Small ribosomal subunit protein uS2c (rps2).